Here is a 436-residue protein sequence, read N- to C-terminus: Indole-3-acetyl-aspartic acid hydrolase (436 aa).

This sequence belongs to the peptidase M20 family. As to quaternary structure, monomer.

It carries out the reaction (indol-3-yl)acetyl-L-aspartate + H2O = (indol-3-yl)acetate + L-aspartate. Its function is as follows. Hydrolyzes indole-3-acetyl-aspartate (IAA-Asp) to indole-3-acetic acid (IAA). Shows an exclusively high substrate specificity for IAA-Asp. The chain is Indole-3-acetyl-aspartic acid hydrolase from Enterobacter agglomerans (Erwinia herbicola).